The primary structure comprises 229 residues: Cytochrome b6-f complex iron-sulfur subunit, chloroplastic (229 aa).

A chloroplast-targeting transit peptide spans 1–50 (MASSSLSPATQLGSSRSALMAMSSGLFVKPTKMNHQMVRKEKIGLRISCQ). Residues 68-90 (LNLLLLGALSLPTGYMLVPYATF) form a helical membrane-spanning segment. The region spanning 115–211 (AAEWLKTHGP…ADIDEAGKVL (97 aa)) is the Rieske domain. [2Fe-2S] cluster contacts are provided by Cys-157, His-159, Cys-175, and His-178. A disulfide bridge links Cys-162 with Cys-177. Ser-196 is subject to Phosphoserine.

This sequence belongs to the Rieske iron-sulfur protein family. In terms of assembly, the 4 large subunits of the cytochrome b6-f complex are cytochrome b6, subunit IV (17 kDa polypeptide, petD), cytochrome f and the Rieske protein, while the 4 small subunits are petG, petL, petM and petN. The complex functions as a dimer. Interacts with PGRL1A. Component of a mitochondrial large protein complex that contains, at least, MIC60, DGS1, TOM40, TOM20 proteins, and petC/RISP. Requires [2Fe-2S] cluster as cofactor. As to expression, confined to photosynthetic tissues, with highest levels in flowers. In leaves, mostly localized in mesophyll cells. In stems, confined to the peripheral ring of chlorenchyma and adjoining groups of cells associated with the vascular bundles. In siliques, present in green wall of the fruit and in peduncle but not in the translucide white septum of the seeds.

The protein localises to the plastid. The protein resides in the chloroplast thylakoid membrane. It is found in the mitochondrion inner membrane. The catalysed reaction is 2 oxidized [plastocyanin] + a plastoquinol + 2 H(+)(in) = 2 reduced [plastocyanin] + a plastoquinone + 4 H(+)(out). In terms of biological role, essential protein for photoautotrophism. Confers resistance to photo-oxidative damages by contributing to the thermal dissipation of light energy and to lumenal acidification (increase of pH gradient). Component of the cytochrome b6-f complex, which mediates electron transfer between photosystem II (PSII) and photosystem I (PSI), cyclic electron flow around PSI, and state transitions. This Arabidopsis thaliana (Mouse-ear cress) protein is Cytochrome b6-f complex iron-sulfur subunit, chloroplastic.